The primary structure comprises 300 residues: Putative 1-phosphofructokinase (300 aa).

Residues 214 to 219 and 246 to 247 each bind ATP; these read SDGAQG and GD. Residue D247 is the Proton acceptor of the active site.

The protein belongs to the carbohydrate kinase PfkB family.

It carries out the reaction beta-D-fructose 1-phosphate + ATP = beta-D-fructose 1,6-bisphosphate + ADP + H(+). In terms of biological role, catalyzes the ATP-dependent phosphorylation of fructose-l-phosphate to fructose-l,6-bisphosphate. This chain is Putative 1-phosphofructokinase (fruK), found in Mycoplasma pneumoniae (strain ATCC 29342 / M129 / Subtype 1) (Mycoplasmoides pneumoniae).